A 449-amino-acid chain; its full sequence is MREVISIHVGQGGIQVGNACWELFCLEHGIQPDGQMPSDKTIGGGDDAFNTFFSETGAGKHVPRAVFLDLEPTVIDEVRTGTYRQLFHPEQLISGKEDAANNFARGHYTIGKEIVDLCLDRIRKLADNCTGLQGFLVFNSVGGGTGSGLGSLLLERLSVDYGKKSKLGFTIYPSPQVSTAVVEPYNSILSTHSLLEHTDVAVMLDNEAIYDICRRNLDIERPTYTNLNRLIAQVISSLTASLRFDGALNVDITEFQTNLVPYPRIHFMLSSYAPIISAEKAYHEQLSVAEITNSAFEPANMMAKCDPRHGKYMACSMMYRGDVVPKDVNASIATIKTKRTIQFVDWCPTGFKVGINYQPPTVVPGGDLAKVMRAVCMISNSTAIAEVFSRLDHKFDLMYAKRAFVHWYVGEGMEEGEFSEAREDLAALEKDYEEVGIETAEGEGEEEGY.

Residue Gln11 coordinates GTP. Lys40 carries the N6-acetyllysine modification. The GTP site is built by Glu71, Ser140, Gly144, Thr145, Thr179, Asn206, and Asn228. Mg(2+) is bound at residue Glu71. Glu254 is an active-site residue.

The protein belongs to the tubulin family. Dimer of alpha and beta chains. A typical microtubule is a hollow water-filled tube with an outer diameter of 25 nm and an inner diameter of 15 nM. Alpha-beta heterodimers associate head-to-tail to form protofilaments running lengthwise along the microtubule wall with the beta-tubulin subunit facing the microtubule plus end conferring a structural polarity. Microtubules usually have 13 protofilaments but different protofilament numbers can be found in some organisms and specialized cells. Mg(2+) serves as cofactor. Undergoes a tyrosination/detyrosination cycle, the cyclic removal and re-addition of a C-terminal tyrosine residue by the enzymes tubulin tyrosine carboxypeptidase (TTCP) and tubulin tyrosine ligase (TTL), respectively. In terms of processing, some glutamate residues at the C-terminus are either polyglutamylated or polyglycylated. These 2 modifications occur exclusively on glutamate residues and result in either polyglutamate or polyglycine chains on the gamma-carboxyl group. Both modifications can coexist on the same protein on adjacent residues, and lowering polyglycylation levels increases polyglutamylation, and reciprocally. The precise function of such modifications is still unclear but they regulate the assembly and dynamics of axonemal microtubules. Post-translationally, acetylation of alpha chains at Lys-40 stabilizes microtubules and affects affinity and processivity of microtubule motors. This modification has a role in multiple cellular functions, ranging from cell motility, cell cycle progression or cell differentiation to intracellular trafficking and signaling.

It localises to the cytoplasm. It is found in the cytoskeleton. It carries out the reaction GTP + H2O = GDP + phosphate + H(+). Tubulin is the major constituent of microtubules, a cylinder consisting of laterally associated linear protofilaments composed of alpha- and beta-tubulin heterodimers. Microtubules grow by the addition of GTP-tubulin dimers to the microtubule end, where a stabilizing cap forms. Below the cap, tubulin dimers are in GDP-bound state, owing to GTPase activity of alpha-tubulin. The protein is Tubulin alpha chain of Tetrahymena thermophila.